Reading from the N-terminus, the 108-residue chain is Tyrosine-protein phosphatase 5 (108 aa).

Positions 1–108 (QESTVIVMLT…QGNNPSPIIV (108 aa)) constitute a Tyrosine-protein phosphatase domain. D78 lines the substrate pocket.

The protein belongs to the protein-tyrosine phosphatase family.

The catalysed reaction is O-phospho-L-tyrosyl-[protein] + H2O = L-tyrosyl-[protein] + phosphate. The polypeptide is Tyrosine-protein phosphatase 5 (STY-5) (Styela plicata (Wrinkled sea squirt)).